Consider the following 249-residue polypeptide: Protein twisted gastrulation (249 aa).

A signal peptide spans 1-23 (MQLLCYFVILFVGIAPWSSLAND). Asn199 carries an N-linked (GlcNAc...) asparagine glycan.

The protein belongs to the twisted gastrulation protein family. As to quaternary structure, component of a complex composed of dpp, sog and tsg. As to expression, first appears in stage 4 embryos, expressed in two domains: a broad mid-dorsal saddle and an anterior cap, expression between the domains is continuous across the dorsal midline. At stage 5, expression is refined into 4 graded stripes in the mid-dorsal region and a paired domain in the anterior region. During stages 7 and 8, anterior expression fades and the mid dorsal stripes are located between the anterior and posterior transverse furrow (ATF and PTF). Expressing cells become incorporated into the deepening PTF.

Its subcellular location is the secreted. Involved in dorsal-ventral patterning. Required for specification of a narrow strip of dorsal midline cells that will give rise to the amnioserosa, but not for specification of dorsal ectoderm cells. Inhibits BMP signaling; enhances the binding of sog to dpp, thus enhancing the antagonistic activity of sog. The polypeptide is Protein twisted gastrulation (tsg) (Drosophila melanogaster (Fruit fly)).